Reading from the N-terminus, the 146-residue chain is Hemoglobin subunit beta (146 aa).

Residues 2 to 146 (PFSAHEEKLI…VAAALSAEYH (145 aa)) enclose the Globin domain. Heme b contacts are provided by His-63 and His-92.

The protein belongs to the globin family. As to quaternary structure, heterotetramer of two alpha chains and two beta chains. In terms of tissue distribution, red blood cells.

In terms of biological role, involved in oxygen transport from the lung to the various peripheral tissues. This Caiman crocodilus (Spectacled caiman) protein is Hemoglobin subunit beta (HBB).